A 104-amino-acid polypeptide reads, in one-letter code: Co-chaperonin GroES 1 (104 aa).

It belongs to the GroES chaperonin family. In terms of assembly, heptamer of 7 subunits arranged in a ring. Interacts with the chaperonin GroEL.

It localises to the cytoplasm. Functionally, together with the chaperonin GroEL, plays an essential role in assisting protein folding. The GroEL-GroES system forms a nano-cage that allows encapsulation of the non-native substrate proteins and provides a physical environment optimized to promote and accelerate protein folding. GroES binds to the apical surface of the GroEL ring, thereby capping the opening of the GroEL channel. The protein is Co-chaperonin GroES 1 of Mesorhizobium japonicum (strain LMG 29417 / CECT 9101 / MAFF 303099) (Mesorhizobium loti (strain MAFF 303099)).